The sequence spans 284 residues: ATP phosphoribosyltransferase (284 aa).

This sequence belongs to the ATP phosphoribosyltransferase family. Long subfamily. Equilibrium between an active dimeric form, an inactive hexameric form and higher aggregates. Interconversion between the various forms is largely reversible and is influenced by the natural substrates and inhibitors of the enzyme. It depends on Mg(2+) as a cofactor.

The protein resides in the cytoplasm. The enzyme catalyses 1-(5-phospho-beta-D-ribosyl)-ATP + diphosphate = 5-phospho-alpha-D-ribose 1-diphosphate + ATP. It participates in amino-acid biosynthesis; L-histidine biosynthesis; L-histidine from 5-phospho-alpha-D-ribose 1-diphosphate: step 1/9. Its activity is regulated as follows. Feedback inhibited by histidine. Catalyzes the condensation of ATP and 5-phosphoribose 1-diphosphate to form N'-(5'-phosphoribosyl)-ATP (PR-ATP). Has a crucial role in the pathway because the rate of histidine biosynthesis seems to be controlled primarily by regulation of HisG enzymatic activity. This Mycobacterium bovis (strain ATCC BAA-935 / AF2122/97) protein is ATP phosphoribosyltransferase (hisG).